Consider the following 645-residue polypeptide: Octopamine receptor Oamb (645 aa).

Residues 1–25 (MNETECEDLIKSVKWTEPANLISLA) are Extracellular-facing. Residue Asn-2 is glycosylated (N-linked (GlcNAc...) asparagine). Residues 26–46 (VLEFINVLVIGGNCLVIAAVF) traverse the membrane as a helical segment. The Cytoplasmic segment spans residues 47–56 (CSNKLRSVTN). Residues 57-77 (FFIVNLAVADLLVGLAVLPFS) form a helical membrane-spanning segment. The Extracellular segment spans residues 78–94 (ATWEVFKVWIFGDLWCR). Cys-93 and Cys-287 are oxidised to a cystine. A helical transmembrane segment spans residues 95-115 (IWLAVDVWMCTASILNLCAIS). Topologically, residues 116–138 (LDRYVAVTRPVTYPSIMSTKKAK) are cytoplasmic. The chain crosses the membrane as a helical span at residues 139-159 (SLIAGIWVLSFFICFPPLVGW). Topologically, residues 160 to 295 (KDQKAVIQPT…KCELTNDRGY (136 aa)) are extracellular. N-linked (GlcNAc...) asparagine glycosylation occurs at Asn-174. Positions 190–212 (QLGLDSIKDQGEASLPPSPPHIG) are disordered. A helical transmembrane segment spans residues 296–316 (VLYSALGSFYIPMFVMLFFYW). Topologically, residues 317–520 (RIYRAAVRTT…FRMETKAAKT (204 aa)) are cytoplasmic. Disordered stretches follow at residues 358–386 (GRGS…PSPE) and 479–500 (RQSN…KKMG). A compositionally biased stretch (low complexity) spans 369-385 (SNGSTQSTTTTLGTPSP). Residues 521–541 (LAIIVGMFIFCWCPFFTMYII) traverse the membrane as a helical segment. Residues 542–551 (RPFCQDCVDP) lie on the Extracellular side of the membrane. Residues 552–572 (LLFSVLFWLGYCNSAVNPMIY) form a helical membrane-spanning segment. At 573 to 645 (ALFSKDFRFA…HHSEMSNDPR (73 aa)) the chain is on the cytoplasmic side. The segment at 621 to 645 (TPSAAAHSFGDESELHHSEMSNDPR) is disordered. Basic and acidic residues predominate over residues 629 to 645 (FGDESELHHSEMSNDPR).

It belongs to the G-protein coupled receptor 1 family. As to expression, highly enriched in mushroom body neuropil and in the ellipsoid body (at protein level). Expressed in oviduct epithelium (at protein level). Expressed in the adult and larval brain, thoracic and abdominal ganglia, terminal cells of the larval tracheal system, muscle, mature eggs and reproductive system.

It localises to the cell membrane. In terms of biological role, receptor for octopamine (OA) which is a neurotransmitter, neurohormone and neuromodulator in invertebrates. Stimulates intracellular accumulation of cAMP and Ca(2+) following ligand binding. Required for ovulation. Following activation on mature follicle cells by OA, induces activity of the metalloprotease Mmp2 which leads to breakdown of the posterior follicle wall, resulting in ovulation. Ligand binding probably also leads to activation of CamKII which is also required for ovulation. Modulates sleep/wake behavior by acting in neurons of the pars intercerebralis to promote wakefulness. Plays a role in courtship conditioning where the courtship behavior of males rejected by already mated females is inhibited with further females. Required in the mushroom body for appetitive olfactory learning. Specifically conveys the short-term reinforcing effects of sweet taste. In insulin-producing cells of the brain, plays a role in inhibiting transcription of insulin-like peptide Ilp3. Also plays a role in social behavior by modulating male agression. The protein is Octopamine receptor Oamb of Drosophila melanogaster (Fruit fly).